Reading from the N-terminus, the 229-residue chain is Cytidylate kinase (229 aa).

Gly-12–Thr-20 provides a ligand contact to ATP.

The protein belongs to the cytidylate kinase family. Type 1 subfamily.

It localises to the cytoplasm. The catalysed reaction is CMP + ATP = CDP + ADP. It carries out the reaction dCMP + ATP = dCDP + ADP. This Serratia proteamaculans (strain 568) protein is Cytidylate kinase.